Here is a 504-residue protein sequence, read N- to C-terminus: MPTVEELYRNYGILADATEQVGQHKDAYQVILDGVKGGTKEKRLAAQFIPKFFKHFPELADSAINAQLDLCEDEDVSIRRQAIKELPQFATGENLPRVADILTQLLQTDDSAEFNLVNNALLSIFKMDAKGTLGGLFSQILQGEDIVRERAIKFLSTKLKTLPDEVLTKEVEELILTESKKVLEDVTGEEFVLFMKILSGLKSLQTVSGRQQLVELVAEQADLEQTFNPSDPDCVDRLLQCTRQAVPLFSKNVHSTRFVTYFCEQVLPNLGTLTTPVEGLDIQLEVLKLLAEMSSFCGDMEKLETNLRKLFDKLLEYMPLPPEEAENGENAGNEEPKLQFSYVECLLYSFHQLGRKLPDFLTAKLNAEKLKDFKIRLQYFARGLQVYIRQLRLALQGKTGEALKTEENKIKVVALKITNNINVLIKDLFHIPPSYKSTVTLSWKPVQKVEIGQKRASEDTTSGSPPKKSSAGPKRDARQIYNPPSGKYSSNLGNFNYERSLQGK.

The segment at 1–360 is ARM-like and Heat-like helical repeats; it reads MPTVEELYRN…HQLGRKLPDF (360 aa). The residue at position 251 (Lys251) is an N6-acetyllysine. The interval 370–391 is leucine-zipper; it reads LKDFKIRLQYFARGLQVYIRQL. Thr399 is subject to Phosphothreonine. The interval 452-504 is disordered; sequence GQKRASEDTTSGSPPKKSSAGPKRDARQIYNPPSGKYSSNLGNFNYERSLQGK. The short motif at 454-475 is the Nuclear localization signal element; sequence KRASEDTTSGSPPKKSSAGPKR. Phosphoserine occurs at positions 462, 464, and 469. Residues 462-472 are compositionally biased toward low complexity; the sequence is SGSPPKKSSAG. Polar residues predominate over residues 487–504; the sequence is KYSSNLGNFNYERSLQGK.

Belongs to the API5 family. In terms of assembly, monomer. Interacts with FGF2 and ACIN1. Acetylation at Lys-251 impairs antiapoptotic function.

It localises to the nucleus. The protein resides in the cytoplasm. In terms of biological role, antiapoptotic factor that may have a role in protein assembly. Negatively regulates ACIN1. By binding to ACIN1, it suppresses ACIN1 cleavage from CASP3 and ACIN1-mediated DNA fragmentation. Also known to efficiently suppress E2F1-induced apoptosis. This Pongo abelii (Sumatran orangutan) protein is Apoptosis inhibitor 5 (API5).